The primary structure comprises 163 residues: Staphylokinase (163 aa).

An N-terminal signal peptide occupies residues 1 to 27 (MLKRSLLFLTVLLLLFSFSSITNEVSA).

It belongs to the staphylokinase family.

It is found in the secreted. Functionally, potent plasminogen activator that converts plasminogen into plasmin. It forms a 1:1 complex with plasmin, which in turn activates other plasminogen molecules. The chain is Staphylokinase (sak) from Staphylococcus aureus (strain MW2).